Consider the following 691-residue polypeptide: Glycine--tRNA ligase beta subunit (691 aa).

This sequence belongs to the class-II aminoacyl-tRNA synthetase family. Tetramer of two alpha and two beta subunits.

The protein resides in the cytoplasm. It catalyses the reaction tRNA(Gly) + glycine + ATP = glycyl-tRNA(Gly) + AMP + diphosphate. The polypeptide is Glycine--tRNA ligase beta subunit (Buchnera aphidicola subsp. Schizaphis graminum (strain Sg)).